The primary structure comprises 150 residues: Ribonuclease H (150 aa).

The RNase H type-1 domain maps to 1–141; the sequence is MKSIEVHTDG…VDVLARNQAI (141 aa). Mg(2+) contacts are provided by Asp-9, Glu-47, Asp-69, and Asp-133.

The protein belongs to the RNase H family. As to quaternary structure, monomer. It depends on Mg(2+) as a cofactor.

The protein resides in the cytoplasm. The catalysed reaction is Endonucleolytic cleavage to 5'-phosphomonoester.. In terms of biological role, endonuclease that specifically degrades the RNA of RNA-DNA hybrids. The protein is Ribonuclease H of Xanthomonas campestris pv. campestris (strain 8004).